A 155-amino-acid chain; its full sequence is Ribosomal RNA large subunit methyltransferase H (155 aa).

S-adenosyl-L-methionine-binding positions include L72, G103, and 122-127; that span reads LSPLTL.

Belongs to the RNA methyltransferase RlmH family. As to quaternary structure, homodimer.

The protein resides in the cytoplasm. It carries out the reaction pseudouridine(1915) in 23S rRNA + S-adenosyl-L-methionine = N(3)-methylpseudouridine(1915) in 23S rRNA + S-adenosyl-L-homocysteine + H(+). Functionally, specifically methylates the pseudouridine at position 1915 (m3Psi1915) in 23S rRNA. In Mannheimia succiniciproducens (strain KCTC 0769BP / MBEL55E), this protein is Ribosomal RNA large subunit methyltransferase H.